Here is a 277-residue protein sequence, read N- to C-terminus: Hematopoietically-expressed homeobox protein HHEX (277 aa).

Disordered regions lie at residues 47–69 and 199–277; these read AAPA…NSSF and WRRL…SATR. A compositionally biased stretch (pro residues) spans 52-63; the sequence is HSLPAPPPPTLP. Positions 144 to 203 form a DNA-binding region, homeobox; the sequence is RKGGQVRFSNEQTIELEKKFETQKYLSPPERKRLAKLLQLSERQVKTWFQNRRAKWRRLK. The span at 210–226 shows a compositional bias: basic and acidic residues; it reads TKKEEAEGTGDHGDPRS. The span at 250-266 shows a compositional bias: acidic residues; that stretch reads EDPESDVSDDSDQEVDI.

In all hematopoietic tissues except peripheral blood erythrocytes and in the liver and lung.

Its subcellular location is the nucleus. Its function is as follows. Recognizes the DNA sequence 5'-ATTAA-3'. Transcriptional repressor. May play a role in hematopoietic differentiation. The polypeptide is Hematopoietically-expressed homeobox protein HHEX (HHEX) (Gallus gallus (Chicken)).